The chain runs to 456 residues: Histidine--tRNA ligase (456 aa).

Residues 1-11 (MTQNENPSAQS) are compositionally biased toward polar residues. The interval 1–22 (MTQNENPSAQSGAKPEDKARPA) is disordered.

Belongs to the class-II aminoacyl-tRNA synthetase family. In terms of assembly, homodimer.

The protein localises to the cytoplasm. The enzyme catalyses tRNA(His) + L-histidine + ATP = L-histidyl-tRNA(His) + AMP + diphosphate + H(+). The sequence is that of Histidine--tRNA ligase from Cupriavidus pinatubonensis (strain JMP 134 / LMG 1197) (Cupriavidus necator (strain JMP 134)).